Consider the following 295-residue polypeptide: MEPMPSATDGGDRSATPSGLSASQRRAELRRRKLLMNSEQRINRIMGFHRPGSGAEEENQTKSKPLDSDILNPLGVPSVSKRVVLGDSVDGGVTDYQPSGGADIRGAQLGDKLDSFIKAPECSSKDGVELRQRNRGDLTADSAPRGSHHGLEQYLSRFEEAMKLRKQLISEKPSQEDGRTTEEFDSFRIFRLVGCALLALVVRAFVCKYLSIFAPFLTLQLAYMGLYKYFPKGEKKVKTTVLTAALLLSGIPAEVINRSMDTYSKMGEVFTDLCVYFFTFIFCHEVLEYWGPEVP.

Disordered regions lie at residues 1-73 and 127-148; these read MEPM…ILNP and GVEL…RGSH. Residues 1–188 lie on the Cytoplasmic side of the membrane; it reads MEPMPSATDG…RTTEEFDSFR (188 aa). Over residues 15–24 the composition is skewed to polar residues; the sequence is ATPSGLSASQ. Serine 53 is subject to Phosphoserine. Basic and acidic residues predominate over residues 127–138; it reads GVELRQRNRGDL. A helical transmembrane segment spans residues 189–206; the sequence is IFRLVGCALLALVVRAFV. Topologically, residues 207-208 are lumenal; that stretch reads CK. The cysteines at positions 207 and 283 are disulfide-linked. Residues 209–227 traverse the membrane as a helical segment; the sequence is YLSIFAPFLTLQLAYMGLY. The Cytoplasmic segment spans residues 228 to 268; that stretch reads KYFPKGEKKVKTTVLTAALLLSGIPAEVINRSMDTYSKMGE. Residues 269–287 form a helical membrane-spanning segment; sequence VFTDLCVYFFTFIFCHEVL. Over 288–295 the chain is Lumenal; the sequence is EYWGPEVP.

As to quaternary structure, component of the Golgi to ER traffic (GET) complex, which is composed of GET1/WRB, CAMLG/GET2 and GET3/TRC40. Within the complex, GET1 and CAMLG form a heterotetramer which is stabilized by phosphatidylinositol binding and which binds to the GET3 homodimer. Interacts (via C-terminus) with GET1. Interacts (via N-terminus) with GET3. GET3 shows a higher affinity for CAMLG than for GET1. Interacts (via N-terminus) with TNFRSF13B/TACI (via C-terminus). In terms of tissue distribution, in the central nervous system, expressed in astrocytes, microglia and neurons (at protein level).

It localises to the endoplasmic reticulum membrane. Its function is as follows. Required for the post-translational delivery of tail-anchored (TA) proteins to the endoplasmic reticulum. Together with GET1/WRB, acts as a membrane receptor for soluble GET3/TRC40, which recognizes and selectively binds the transmembrane domain of TA proteins in the cytosol. Required for the stability of GET1. Stimulates calcium signaling in T cells through its involvement in elevation of intracellular calcium. Essential for the survival of peripheral follicular B cells. This chain is Guided entry of tail-anchored proteins factor CAMLG, found in Rattus norvegicus (Rat).